The chain runs to 91 residues: Defensin-like protein 220 (91 aa).

A signal peptide spans 1-19 (MKTIFFFITFIVLVSSCTS). 3 cysteine pairs are disulfide-bonded: cysteine 61-cysteine 78, cysteine 64-cysteine 83, and cysteine 68-cysteine 85.

The protein belongs to the DEFL family.

The protein resides in the secreted. This Arabidopsis thaliana (Mouse-ear cress) protein is Defensin-like protein 220.